We begin with the raw amino-acid sequence, 67 residues long: Toxin Bl-1 (67 aa).

The LCN-type CS-alpha/beta domain occupies 2-66 (RDGYISQPEN…GIIVDGIKCH (65 aa)). 4 cysteine pairs are disulfide-bonded: Cys-12–Cys-65, Cys-16–Cys-37, Cys-23–Cys-47, and Cys-27–Cys-49. Thr-67 is modified (threonine amide).

The protein belongs to the long (4 C-C) scorpion toxin superfamily. Sodium channel inhibitor family. Alpha subfamily. As to expression, expressed by the venom gland.

It is found in the secreted. Its function is as follows. Alpha toxins bind voltage-independently at site-3 of sodium channels (Nav) and inhibit the inactivation of the activated channels, thereby blocking neuronal transmission. Is highly toxic to insects (tested on the crickets A.domesticus). This peptide may also be toxic to mammals, since it is similar to alpha-like toxins that are active on both insect and mammalian sodium channels. This is Toxin Bl-1 from Buthacus leptochelys (Egyptian fat-tailed scorpion).